The following is a 242-amino-acid chain: DNA repair protein RecO (242 aa).

This sequence belongs to the RecO family. In terms of assembly, monomer.

In terms of biological role, involved in DNA repair and RecF pathway recombination. This chain is DNA repair protein RecO, found in Shigella sonnei (strain Ss046).